Here is a 98-residue protein sequence, read N- to C-terminus: NADH-ubiquinone oxidoreductase chain 4L (98 aa).

Helical transmembrane passes span 1-21, 29-49, and 61-81; these read MSMV…GLLM, SLLC…LTIL, and IILL…LVMV.

Belongs to the complex I subunit 4L family. Core subunit of respiratory chain NADH dehydrogenase (Complex I) which is composed of 45 different subunits.

It localises to the mitochondrion inner membrane. It catalyses the reaction a ubiquinone + NADH + 5 H(+)(in) = a ubiquinol + NAD(+) + 4 H(+)(out). Core subunit of the mitochondrial membrane respiratory chain NADH dehydrogenase (Complex I) which catalyzes electron transfer from NADH through the respiratory chain, using ubiquinone as an electron acceptor. Part of the enzyme membrane arm which is embedded in the lipid bilayer and involved in proton translocation. In Bos mutus grunniens (Wild yak), this protein is NADH-ubiquinone oxidoreductase chain 4L (MT-ND4L).